The chain runs to 234 residues: Orotidine 5'-phosphate decarboxylase (234 aa).

Residues Asp-10, Lys-31, 58 to 67 (DLKLHDIPNT), Thr-121, Arg-183, Gln-192, Gly-212, and Arg-213 contribute to the substrate site. Lys-60 (proton donor) is an active-site residue.

The protein belongs to the OMP decarboxylase family. Type 1 subfamily. Homodimer.

The enzyme catalyses orotidine 5'-phosphate + H(+) = UMP + CO2. The protein operates within pyrimidine metabolism; UMP biosynthesis via de novo pathway; UMP from orotate: step 2/2. Catalyzes the decarboxylation of orotidine 5'-monophosphate (OMP) to uridine 5'-monophosphate (UMP). The protein is Orotidine 5'-phosphate decarboxylase of Halalkalibacterium halodurans (strain ATCC BAA-125 / DSM 18197 / FERM 7344 / JCM 9153 / C-125) (Bacillus halodurans).